A 491-amino-acid chain; its full sequence is Cyclin-A1-3 (491 aa).

The segment covering 1-21 (MSSSLASRRSSSSSAAKRPAA) has biased composition (low complexity). Disordered regions lie at residues 1-32 (MSSS…AAGA) and 69-106 (SLAS…QKES). Residues 75-91 (NVGTNRVSAVKSASTKP) show a composition bias toward polar residues.

Belongs to the cyclin family. Cyclin AB subfamily.

The polypeptide is Cyclin-A1-3 (CYCA1-3) (Oryza sativa subsp. japonica (Rice)).